The following is a 465-amino-acid chain: uncharacterized protein (465 aa).

A TRAM domain is found at 1–50 (MEITDLAAEGNALCRIDDMVMFVPFAAPGDRCTVQVVKKKRNFMQGRIVS). Residues Cys-63, Cys-69, Cys-72, and Cys-168 each coordinate [4Fe-4S] cluster. S-adenosyl-L-methionine is bound by residues Gln-293, Tyr-322, Glu-343, and Asp-392. The active-site Nucleophile is Cys-419.

Belongs to the class I-like SAM-binding methyltransferase superfamily. RNA M5U methyltransferase family.

This is an uncharacterized protein from Porphyromonas gingivalis (strain ATCC BAA-308 / W83).